Consider the following 131-residue polypeptide: uncharacterized protein (131 aa).

The N-terminal stretch at 1-19 (MRESLFIIFFQFVCHSSNS) is a signal peptide. 2 consecutive transmembrane segments (helical) span residues 33–53 (PLLT…ALFF) and 111–131 (VSFN…FFLF).

It localises to the membrane. This is an uncharacterized protein from Saccharomyces cerevisiae (strain ATCC 204508 / S288c) (Baker's yeast).